Consider the following 515-residue polypeptide: Maturase K (515 aa).

This sequence belongs to the intron maturase 2 family. MatK subfamily.

The protein localises to the plastid. It localises to the chloroplast. Its function is as follows. Usually encoded in the trnK tRNA gene intron. Probably assists in splicing its own and other chloroplast group II introns. The protein is Maturase K of Pinus roxburghii (Chir pine).